Here is a 395-residue protein sequence, read N- to C-terminus: Zinc-regulated GTPase metalloprotein activator 1E (395 aa).

Positions 1–22 (MLPAVGSVDEEEDPAEEDCPEL) are disordered. A compositionally biased stretch (acidic residues) spans 8 to 20 (VDEEEDPAEEDCP). Residues 17-24 (EDCPELVP) carry the psi-PxLVp motif motif. 49–56 (GYLGAGKT) provides a ligand contact to GTP. Zn(2+) is bound by residues Cys107, Cys109, and Cys110. Residues 107 to 110 (CLCC) carry the CXCC motif motif. GTP contacts are provided by residues 110–114 (CSVKD) and 203–206 (NKTD). The CobW C-terminal domain maps to 274–377 (IVTITFEVPG…ILKQLFIATV (104 aa)).

This sequence belongs to the SIMIBI class G3E GTPase family. ZNG1 subfamily.

The protein resides in the nucleus. It carries out the reaction GTP + H2O = GDP + phosphate + H(+). In terms of biological role, zinc chaperone that directly transfers zinc cofactor to target metalloproteins, thereby activating them. Catalyzes zinc insertion into the active site of methionine aminopeptidase METAP1, which function to cleave the initiator methionine from polypeptides during or after protein translation. Mechanistically, the N-terminal psi-PxLVp motif binds to the C6H2-type zinc finger of inactive form of METAP1. After formation of the docked complex, zinc is transferred from the CXCC motif in the GTPase domain of ZNG1E to the zinc binding site in the peptidase domain of METAP1 in a process requiring GTP hydrolysis. GTP/GDP exchange is required for release of active METAP1. In Homo sapiens (Human), this protein is Zinc-regulated GTPase metalloprotein activator 1E.